The following is a 322-amino-acid chain: Acetyl-coenzyme A carboxylase carboxyl transferase subunit alpha (322 aa).

The CoA carboxyltransferase C-terminal domain occupies 32-293 (DISEEIARLE…KRALQDALRQ (262 aa)).

Belongs to the AccA family. In terms of assembly, acetyl-CoA carboxylase is a heterohexamer composed of biotin carboxyl carrier protein (AccB), biotin carboxylase (AccC) and two subunits each of ACCase subunit alpha (AccA) and ACCase subunit beta (AccD).

The protein resides in the cytoplasm. It carries out the reaction N(6)-carboxybiotinyl-L-lysyl-[protein] + acetyl-CoA = N(6)-biotinyl-L-lysyl-[protein] + malonyl-CoA. It functions in the pathway lipid metabolism; malonyl-CoA biosynthesis; malonyl-CoA from acetyl-CoA: step 1/1. Functionally, component of the acetyl coenzyme A carboxylase (ACC) complex. First, biotin carboxylase catalyzes the carboxylation of biotin on its carrier protein (BCCP) and then the CO(2) group is transferred by the carboxyltransferase to acetyl-CoA to form malonyl-CoA. This Aromatoleum aromaticum (strain DSM 19018 / LMG 30748 / EbN1) (Azoarcus sp. (strain EbN1)) protein is Acetyl-coenzyme A carboxylase carboxyl transferase subunit alpha.